The sequence spans 383 residues: GTP-binding protein 10 homolog (383 aa).

Residues 22–157 (PSFLDTLRLA…RIVNLDLKLI (136 aa)) form the Obg domain. In terms of domain architecture, OBG-type G spans 158 to 353 (ADVGLVGFPN…VKSQLRRTLV (196 aa)). Residues 164 to 171 (GFPNAGKS), 211 to 215 (DLPGL), and 287 to 290 (NKMD) contribute to the GTP site.

Belongs to the TRAFAC class OBG-HflX-like GTPase superfamily. OBG GTPase family.

The protein resides in the nucleus. Its subcellular location is the nucleolus. Its function is as follows. May be involved in the ribosome maturation process. This chain is GTP-binding protein 10 homolog, found in Drosophila pseudoobscura pseudoobscura (Fruit fly).